The sequence spans 852 residues: Protein SBE22 (852 aa).

The tract at residues methionine 1 to proline 158 is disordered. Basic and acidic residues predominate over residues serine 15–serine 26. The span at proline 43–lysine 61 shows a compositional bias: polar residues. Serine 72 is subject to Phosphoserine. A compositionally biased stretch (polar residues) spans asparagine 74–asparagine 96. Over residues threonine 124–aspartate 139 the composition is skewed to low complexity. Serine 201 carries the phosphoserine modification. The segment at alanine 206 to threonine 248 is disordered. Residues serine 224 to lysine 235 are compositionally biased toward low complexity. Serine 459, serine 517, and serine 520 each carry phosphoserine.

This sequence belongs to the SBE2 family.

Its subcellular location is the cytoplasm. The protein localises to the golgi apparatus. Its function is as follows. With SBE2, is involved in cell wall integrity and polarity processes like bud growth, through the transport of CHS3 and UTR2 to sites of growth. The chain is Protein SBE22 (SBE22) from Saccharomyces cerevisiae (strain YJM789) (Baker's yeast).